The sequence spans 142 residues: Small ribosomal subunit protein uS11 (142 aa).

The tract at residues 1-21 (MPPKTRGAVRKPRRKDKKNIA) is disordered. The span at 7 to 17 (GAVRKPRRKDK) shows a compositional bias: basic residues.

It belongs to the universal ribosomal protein uS11 family. In terms of assembly, part of the 30S ribosomal subunit. Interacts with proteins S7 and S18. Binds to IF-3.

Located on the platform of the 30S subunit, it bridges several disparate RNA helices of the 16S rRNA. Forms part of the Shine-Dalgarno cleft in the 70S ribosome. In Paenarthrobacter aurescens (strain TC1), this protein is Small ribosomal subunit protein uS11.